The primary structure comprises 254 residues: Probable phosphomannomutase (254 aa).

The active-site Nucleophile is aspartate 14. The Mg(2+) site is built by aspartate 14 and aspartate 16. Catalysis depends on aspartate 16, which acts as the Proton donor/acceptor. Alpha-D-mannose 1-phosphate is bound by residues arginine 23, arginine 129, arginine 140, arginine 147, serine 185, and aspartate 187. Mg(2+)-binding residues include aspartate 214, phenylalanine 226, aspartate 228, and threonine 231.

The protein belongs to the eukaryotic PMM family. Homodimer.

The protein localises to the cytoplasm. It carries out the reaction alpha-D-mannose 1-phosphate = D-mannose 6-phosphate. Its pathway is nucleotide-sugar biosynthesis; GDP-alpha-D-mannose biosynthesis; alpha-D-mannose 1-phosphate from D-fructose 6-phosphate: step 2/2. Involved in the synthesis of the GDP-mannose and dolichol-phosphate-mannose required for a number of critical mannosyl transfer reactions. The sequence is that of Probable phosphomannomutase from Caenorhabditis elegans.